The following is a 279-amino-acid chain: Ribosomal RNA small subunit methyltransferase A (279 aa).

S-adenosyl-L-methionine is bound by residues His-12, Leu-14, Gly-39, Glu-60, Asp-81, and Asn-118.

Belongs to the class I-like SAM-binding methyltransferase superfamily. rRNA adenine N(6)-methyltransferase family. RsmA subfamily.

Its subcellular location is the cytoplasm. The catalysed reaction is adenosine(1518)/adenosine(1519) in 16S rRNA + 4 S-adenosyl-L-methionine = N(6)-dimethyladenosine(1518)/N(6)-dimethyladenosine(1519) in 16S rRNA + 4 S-adenosyl-L-homocysteine + 4 H(+). Its function is as follows. Specifically dimethylates two adjacent adenosines (A1518 and A1519) in the loop of a conserved hairpin near the 3'-end of 16S rRNA in the 30S particle. May play a critical role in biogenesis of 30S subunits. In Polaromonas naphthalenivorans (strain CJ2), this protein is Ribosomal RNA small subunit methyltransferase A.